The chain runs to 211 residues: Ribosomal RNA small subunit methyltransferase G (211 aa).

S-adenosyl-L-methionine-binding positions include Gly76, Leu81, 127–128 (VE), and Arg142.

Belongs to the methyltransferase superfamily. RNA methyltransferase RsmG family.

Its subcellular location is the cytoplasm. The catalysed reaction is guanosine(527) in 16S rRNA + S-adenosyl-L-methionine = N(7)-methylguanosine(527) in 16S rRNA + S-adenosyl-L-homocysteine. Its function is as follows. Specifically methylates the N7 position of guanine in position 527 of 16S rRNA. In Vibrio vulnificus (strain CMCP6), this protein is Ribosomal RNA small subunit methyltransferase G.